The sequence spans 215 residues: MHRDAWLPRPAFSLTGLSLFFSLVPPGRSMEVTAPTTLSVLNGSDTRLPCTFNSCYTVNHKQFSLNWTYQECNNCTEEMFLQFRMKIINLKLERFGDRVEFSGNPSKYDVSVTLKNVQLEDEGIYNCYITNPPDRHRGHGKIYLQVLLEVPPERDSTVAVIVGASVGGFLAVVILVLMVVKCVRRKKEQKLSTDDLKTEEEGKMDGEGNAEDGTK.

Residues 1–29 form the signal peptide; it reads MHRDAWLPRPAFSLTGLSLFFSLVPPGRS. The Extracellular portion of the chain corresponds to 30–157; sequence MEVTAPTTLS…LEVPPERDST (128 aa). Positions 32 to 154 constitute an Ig-like C2-type domain; the sequence is VTAPTTLSVL…QVLLEVPPER (123 aa). N-linked (GlcNAc...) asparagine glycosylation is found at Asn42, Asn66, and Asn74. 2 disulfide bridges follow: Cys50-Cys127 and Cys72-Cys75. A helical membrane pass occupies residues 158–179; sequence VAVIVGASVGGFLAVVILVLMV. The Cytoplasmic portion of the chain corresponds to 180 to 215; sequence VKCVRRKKEQKLSTDDLKTEEEGKMDGEGNAEDGTK. Residues 188-215 form a disordered region; the sequence is EQKLSTDDLKTEEEGKMDGEGNAEDGTK. The span at 189-215 shows a compositional bias: basic and acidic residues; sequence QKLSTDDLKTEEEGKMDGEGNAEDGTK. Ser192 carries the phosphoserine modification.

Belongs to the sodium channel auxiliary subunit SCN2B (TC 8.A.17) family. In terms of assembly, a voltage-gated sodium (Nav) channel consists of an ion-conducting pore-forming alpha subunit functional on its own that is regulated by one or more beta subunits. The beta subunit SCN2B is disulfide-linked to the pore-forming alpha subunit. Interacts with SCN1A; regulatory subunit of SCN1A/Nav1.1. Interacts with SCN2A; regulatory subunit of SCN2A/Nav1.2. Interacts with SCN3A; regulatory subunit of SCN3A/Nav1.3. Interacts with SCN5A; regulatory subunit of SCN5A/Nav1.5. Interacts with SCN8A; regulatory subunit of SCN8A/Nav1.6. Interacts with SCN9A; regulatory subunit of SCN9A/Nav1.7. Interacts with SCN10A; regulatory subunit of SCN10A/Nav1.8. Interacts with TNR; may play a crucial role in clustering and regulation of activity of SCN2B-containing Nav channels at nodes of Ranvier.

It is found in the cell membrane. The protein localises to the cell projection. It localises to the axon. Its function is as follows. Regulatory subunit of multiple voltage-gated sodium (Nav) channels directly mediating the depolarization of excitable membranes. Navs, also called VGSCs (voltage-gated sodium channels) or VDSCs (voltage-dependent sodium channels), operate by switching between closed and open conformations depending on the voltage difference across the membrane. In the open conformation they allow Na(+) ions to selectively pass through the pore, along their electrochemical gradient. The influx of Na+ ions provokes membrane depolarization, initiating the propagation of electrical signals throughout cells and tissues. The accessory beta subunits participate in localization and functional modulation of the Nav channels. Modulates the activity of SCN1A/Nav1.1, SCN2A/Nav1.2, SCN2A/Nav1.3, SCN5A/Nav1.5, SCN8A/Nav1.6, SCN9A/Nav1.7 and SCN10A/Nav1.8. This is Sodium channel regulatory subunit beta-2 from Mus musculus (Mouse).